The primary structure comprises 361 residues: Protein RecA (361 aa).

An ATP-binding site is contributed by 77 to 84 (GPESSGKT).

Belongs to the RecA family.

It localises to the cytoplasm. Functionally, can catalyze the hydrolysis of ATP in the presence of single-stranded DNA, the ATP-dependent uptake of single-stranded DNA by duplex DNA, and the ATP-dependent hybridization of homologous single-stranded DNAs. It interacts with LexA causing its activation and leading to its autocatalytic cleavage. The protein is Protein RecA of Rhizobium etli.